Consider the following 328-residue polypeptide: Phosphoserine phosphatase (328 aa).

The active-site Nucleophile is aspartate 113. Mg(2+) is bound by residues aspartate 113 and aspartate 115. Residue aspartate 115 is the Proton donor of the active site. Substrate contacts are provided by residues glutamate 122, arginine 158, 201 to 202, and lysine 246; that span reads SG. Aspartate 269 serves as a coordination point for Mg(2+). Asparagine 272 provides a ligand contact to substrate.

This sequence belongs to the HAD-like hydrolase superfamily. SerB family. It depends on Mg(2+) as a cofactor.

The enzyme catalyses O-phospho-L-serine + H2O = L-serine + phosphate. It catalyses the reaction O-phospho-D-serine + H2O = D-serine + phosphate. It functions in the pathway amino-acid biosynthesis; L-serine biosynthesis; L-serine from 3-phospho-D-glycerate: step 3/3. The sequence is that of Phosphoserine phosphatase from Vibrio cholerae serotype O1 (strain ATCC 39315 / El Tor Inaba N16961).